Here is a 211-residue protein sequence, read N- to C-terminus: Suppressor of cytokine signaling 1 (211 aa).

Positions 1-53 (MVAHNQVAADNAVSTAAEPRRRPEPSSSSSSSPAAPARPRPCPAVPAPAPGDT) are disordered. Residues 25 to 35 (PSSSSSSSPAA) show a composition bias toward low complexity. The segment covering 36–49 (PARPRPCPAVPAPA) has biased composition (pro residues). The interval 55–66 (FRTFRSHADYRR) is kinase inhibitory region (KIR). An extended SH2 subdomain (ESS) region spans residues 67 to 78 (ITRASALLDACG). Positions 79–174 (FYWGPLSVHG…PLRQRRVRPL (96 aa)) constitute an SH2 domain. The region spanning 161–210 (MLGAPLRQRRVRPLQELCRQRIVATVGRENLARIPLNPVLRDYLSSFPFQ) is the SOCS box domain. The interval 173–182 (PLQELCRQRI) is interaction with Elongin BC complex.

Belongs to the SOCS1 family. As to quaternary structure, interacts with multiple activated signaling proteins of the tyrosine kinase signaling pathway including JAK family kinases, TEC, KIT, GRB2 and VAV. Binding to JAKs is mediated through the KIR and SH2 domains to a phosphorylated tyrosine residue within the JAK JH1 domain. Binds the SH3 domain of GRB2 via diproline determinants in the N-terminus, and the N-terminal regulatory domain of VAV. Interacts with the Elongin BC complex (ELOB and ELOC). Component of an ECS CBC(SOCS1) E3 ubiquitin-protein ligase complex which contains Elongin BC, CUL5, RBX1 and SOCS1. Interacts (via SH2 domain and SOCS box) with TRIM8. Interacts with AXL, CUL2 and FGFR3. Interacts with INSR. Interacts with TRIM8. Interacts with DCUN1D1. Interacts with IFNGR1. In terms of tissue distribution, expressed in all tissues with high expression in spleen, small intestine and peripheral blood leukocytes.

It localises to the nucleus. Its subcellular location is the cytoplasmic vesicle. It functions in the pathway protein modification; protein ubiquitination. In terms of biological role, essential negative regulator of type I and type II interferon (IFN) signaling, as well as that of other cytokines, including IL2, IL4, IL6 and leukemia inhibitory factor (LIF). Downregulates cytokine signaling by inhibiting the JAK/STAT signaling pathway. Acts by binding to JAK proteins and to IFNGR1 and inhibiting their kinase activity. In vitro, suppresses Tec protein-tyrosine activity. Regulates IFN-gamma (IFNG)-mediated sensory neuron survival. Probable substrate recognition component of an ECS (Elongin BC-CUL2/5-SOCS-box protein) E3 ubiquitin ligase complex which mediates the ubiquitination and subsequent proteasomal degradation of target proteins. This Homo sapiens (Human) protein is Suppressor of cytokine signaling 1 (SOCS1).